The chain runs to 591 residues: PDZ and LIM domain protein 5 (591 aa).

Position 2 is an N-acetylserine (S2). At S2 the chain carries Phosphoserine. One can recognise a PDZ domain in the interval 2-85 (SNYNVSLVGP…SLNMTLQRAS (84 aa)). K89 is subject to N6-acetyllysine; alternate. K89 carries the N6-succinyllysine; alternate modification. K89 participates in a covalent cross-link: Glycyl lysine isopeptide (Lys-Gly) (interchain with G-Cter in SUMO2); alternate. 3 positions are modified to phosphoserine: S111, S134, and S137. Disordered regions lie at residues 125-240 (YNKV…GPPR) and 255-334 (THSD…SNRP). Polar residues predominate over residues 134–143 (SVSSPKVTSI). Low complexity predominate over residues 144–161 (PSPSSAFTPAHAATSSHA). The segment covering 162 to 174 (SPPPVAAVTPPPL) has biased composition (pro residues). 2 stretches are compositionally biased toward polar residues: residues 183–195 (ANPS…SPPN) and 207–217 (PTVTSVCSESA). S228 and S260 each carry phosphoserine. Composition is skewed to basic and acidic residues over residues 258–273 (DASK…DWRP) and 293–304 (EHLKESENDNAK). The segment covering 310-329 (PEPSQQSASPLSAAESLESP) has biased composition (low complexity). A phosphoserine mark is found at S313 and S318. Position 346 is an N6-acetyllysine (K346). The disordered stretch occupies residues 348–398 (VGSTSVKSPSWQRPNQAAPSTGRISNSASSSGTGAPMKPAVGPPQPSDQDT). Over residues 349–380 (GSTSVKSPSWQRPNQAAPSTGRISNSASSSGT) the composition is skewed to polar residues. Phosphoserine occurs at positions 355 and 357. LIM zinc-binding domains lie at 413-472 (PMCA…FFAP), 472-531 (PECG…LFGT), and 531-591 (TICR…SVNF).

As to quaternary structure, interacts with various PKC isoforms through the LIM domains. Interacts with actin and alpha-actinin through the PDZ domain. Interacts (via LIM domains) with SIPA1L1/SPAR; this interaction may occur preferentially with isoform 1. Detected in brain, in neurons, including in hippocampal neurons, and glial cells (at protein level). Detected in heart and skeletal muscle.

It is found in the postsynaptic density. It localises to the presynapse. The protein localises to the postsynapse. The protein resides in the cytoplasm. Its subcellular location is the cytosol. In terms of biological role, may play an important role in the heart development by scaffolding PKC to the Z-disk region. May play a role in the regulation of cardiomyocyte expansion. Isoforms lacking the LIM domains may negatively modulate the scaffolding activity of isoform 1. Overexpression promotes the development of heart hypertrophy. Contributes to the regulation of dendritic spine morphogenesis in neurons. May be required to restrain postsynaptic growth of excitatory synapses. Isoform 1, but not isoform 2, expression favors spine thinning and elongation. The polypeptide is PDZ and LIM domain protein 5 (Pdlim5) (Rattus norvegicus (Rat)).